The sequence spans 492 residues: Citrate synthase, peroxisomal (492 aa).

Residues His-307, His-346, and Asp-402 contribute to the active site. Positions 469–492 (PAKVRSQDSYSSATTKRYSKVTSH) are disordered. The span at 475-484 (QDSYSSATTK) shows a compositional bias: polar residues.

This sequence belongs to the citrate synthase family.

Its subcellular location is the peroxisome. The enzyme catalyses oxaloacetate + acetyl-CoA + H2O = citrate + CoA + H(+). It participates in carbohydrate metabolism; tricarboxylic acid cycle; isocitrate from oxaloacetate: step 1/2. In terms of biological role, peroxisomal protein involved in the cellular biosynthesis of citrate, and required primarily for cell growth and modulation of multicellular development. This Dictyostelium discoideum (Social amoeba) protein is Citrate synthase, peroxisomal (cshA).